We begin with the raw amino-acid sequence, 85 residues long: uncharacterized protein (85 aa).

The interval 1–85 (MRWRPSSWSA…DQEQCGQHCR (85 aa)) is disordered. Residues 47–61 (ASVEGEGGRHADRHG) show a composition bias toward basic and acidic residues.

This is an uncharacterized protein from Streptomyces lividans.